The sequence spans 319 residues: Probable metallo-hydrolase YqjP (319 aa).

Residues His-67, His-69, Asp-71, His-72, His-165, Asp-184, and His-231 each contribute to the Zn(2+) site.

It belongs to the metallo-beta-lactamase superfamily. Zn(2+) is required as a cofactor.

The polypeptide is Probable metallo-hydrolase YqjP (yqjP) (Bacillus subtilis (strain 168)).